A 1032-amino-acid polypeptide reads, in one-letter code: Exportin-T (1032 aa).

The protein belongs to the exportin family.

Its subcellular location is the nucleus. The protein localises to the cytoplasm. In terms of biological role, tRNA nucleus export receptor which facilitates tRNA translocation across the nuclear pore complex. Involved in pre-tRNA splicing, probably by affecting the interaction of pre-tRNA with splicing endonuclease. This Aspergillus fumigatus (strain CBS 144.89 / FGSC A1163 / CEA10) (Neosartorya fumigata) protein is Exportin-T (los1).